The following is an 805-amino-acid chain: Mitochondrial inner membrane m-AAA protease component AFG3L2 (805 aa).

A mitochondrion-targeting transit peptide spans 1 to 39; sequence MAHRCLLLWGRGACRPRGMPPMLLPGGRTGSTERLYLRM. Residues 40-67 constitute a propeptide, removed in mature form; sequence LYRYATTQAKTSRNSLLTDVIAAYQRLC. Residues 74-127 are disordered; sequence FEKYFPNGKNGKKTSEPKEVMGEKKEPKPAAAPRPSGGGVGGGGKRGGKKDDSH. Residues 86-101 are compositionally biased toward basic and acidic residues; it reads KTSEPKEVMGEKKEPK. The segment covering 109–118 has biased composition (gly residues); that stretch reads SGGGVGGGGK. Lysine 118 bears the N6-succinyllysine mark. 2 helical membrane-spanning segments follow: residues 144 to 164 and 252 to 272; these read FKMY…YFLF and GSFL…LYTI. Residues valine 311, alanine 312, threonine 353, glycine 354, lysine 355, threonine 356, leucine 357, and histidine 491 each contribute to the ATP site. Histidine 575 is a Zn(2+) binding site. The active site involves glutamate 576. Positions 579 and 650 each coordinate Zn(2+). Residues 760-805 are disordered; sequence FVEGTGSLDEDTSLPEGLKDWNREREGSEEPSGEKVTSPVQGAGPA. Over residues 776–787 the composition is skewed to basic and acidic residues; that stretch reads GLKDWNREREGS.

In the N-terminal section; belongs to the AAA ATPase family. It in the C-terminal section; belongs to the peptidase M41 family. In terms of assembly, homohexamer. Forms heterohexamers with SPG7. The m-AAA protease is either composed of homohexamers of AFG3L2 or heterohexamers of AFG3L2 and SPG7. Interacts with MAIP1. Interacts with DNAJC19. Interacts with PHB2. Zn(2+) serves as cofactor. Upon import into the mitochondrion, the N-terminal transit peptide is cleaved to generate an intermediate form which undergoes autocatalytic proteolytic processing to generate the proteolytically active mature form.

It is found in the mitochondrion inner membrane. The catalysed reaction is ATP + H2O = ADP + phosphate + H(+). Catalytic component of the m-AAA protease, a protease that plays a key role in proteostasis of inner mitochondrial membrane proteins, and which is essential for axonal and neuron development. AFG3L2 possesses both ATPase and protease activities: the ATPase activity is required to unfold substrates, threading them into the internal proteolytic cavity for hydrolysis into small peptide fragments. The m-AAA protease carries out protein quality control in the inner membrane of the mitochondria by mediating degradation of mistranslated or misfolded polypeptides. The m-AAA protease complex also promotes the processing and maturation of mitochondrial proteins, such as MRPL32/bL32m, PINK1 and SP7. Mediates protein maturation of the mitochondrial ribosomal subunit MRPL32/bL32m by catalyzing the cleavage of the presequence of MRPL32/bL32m prior to assembly into the mitochondrial ribosome. Required for SPG7 maturation into its active mature form after SPG7 cleavage by mitochondrial-processing peptidase (MPP). Required for the maturation of PINK1 into its 52kDa mature form after its cleavage by mitochondrial-processing peptidase (MPP). Acts as a regulator of calcium in neurons by mediating degradation of SMDT1/EMRE before its assembly with the uniporter complex, limiting the availability of SMDT1/EMRE for MCU assembly and promoting efficient assembly of gatekeeper subunits with MCU. Promotes the proteolytic degradation of GHITM upon hyperpolarization of mitochondria: progressive GHITM degradation leads to respiratory complex I degradation and broad reshaping of the mitochondrial proteome by AFG3L2. Also acts as a regulator of mitochondrial glutathione homeostasis by mediating cleavage and degradation of SLC25A39. SLC25A39 cleavage is prevented when SLC25A39 binds iron-sulfur. Involved in the regulation of OMA1-dependent processing of OPA1. May act by mediating processing of OMA1 precursor, participating in OMA1 maturation. This Bos taurus (Bovine) protein is Mitochondrial inner membrane m-AAA protease component AFG3L2 (AFG3L2).